Reading from the N-terminus, the 204-residue chain is Golgi to ER traffic protein 1 (204 aa).

Residues Met1–Ile11 are Lumenal-facing. A helical transmembrane segment spans residues Leu12–Gln31. At Lys32–Ile116 the chain is on the cytoplasmic side. A coiled-coil region spans residues Ala78 to Lys113. The chain crosses the membrane as a helical span at residues Thr117–Leu137. The Lumenal segment spans residues Tyr138–Thr161. A helical membrane pass occupies residues Ile162 to Leu178. Residues Ile179 to Ser204 are Cytoplasmic-facing.

Belongs to the WRB/GET1 family. Component of the Golgi to ER traffic (GET) complex, which is composed of GET1, GET2 and GET3. Within the complex, GET1 and GET2 form a heterotetramer which is stabilized by phosphatidylinositol binding and which binds to the GET3 homodimer.

It is found in the endoplasmic reticulum membrane. The protein resides in the golgi apparatus membrane. Functionally, required for the post-translational delivery of tail-anchored (TA) proteins to the endoplasmic reticulum. Together with GET2, acts as a membrane receptor for soluble GET3, which recognizes and selectively binds the transmembrane domain of TA proteins in the cytosol. The GET complex cooperates with the HDEL receptor ERD2 to mediate the ATP-dependent retrieval of resident ER proteins that contain a C-terminal H-D-E-L retention signal from the Golgi to the ER. The chain is Golgi to ER traffic protein 1 from Lodderomyces elongisporus (strain ATCC 11503 / CBS 2605 / JCM 1781 / NBRC 1676 / NRRL YB-4239) (Yeast).